A 180-amino-acid chain; its full sequence is Large ribosomal subunit protein uL6 (180 aa).

This sequence belongs to the universal ribosomal protein uL6 family. In terms of assembly, part of the 50S ribosomal subunit.

In terms of biological role, this protein binds to the 23S rRNA, and is important in its secondary structure. It is located near the subunit interface in the base of the L7/L12 stalk, and near the tRNA binding site of the peptidyltransferase center. This is Large ribosomal subunit protein uL6 from Clostridium botulinum (strain Loch Maree / Type A3).